The primary structure comprises 255 residues: Cytosolic Fe-S cluster assembly factor Nubp2 homolog (255 aa).

Residue 14–21 coordinates ATP; the sequence is GKGGVGKS. [4Fe-4S] cluster is bound by residues cysteine 185 and cysteine 188.

Belongs to the Mrp/NBP35 ATP-binding proteins family. NUBP2/CFD1 subfamily. In terms of assembly, heterotetramer of 2 Nubp1 and 2 Nubp2 chains. [4Fe-4S] cluster serves as cofactor.

Its subcellular location is the cytoplasm. Functionally, component of the cytosolic iron-sulfur (Fe/S) protein assembly (CIA) machinery. Required for maturation of extramitochondrial Fe-S proteins. The Nubp1-Nubp2 heterotetramer forms a Fe-S scaffold complex, mediating the de novo assembly of an Fe-S cluster and its transfer to target apoproteins. This chain is Cytosolic Fe-S cluster assembly factor Nubp2 homolog, found in Drosophila persimilis (Fruit fly).